Reading from the N-terminus, the 522-residue chain is 2-isopropylmalate synthase (522 aa).

In terms of domain architecture, Pyruvate carboxyltransferase spans 5 to 267 (VIIFDTTLRD…ETGINAKEIH (263 aa)). Positions 14, 202, 204, and 238 each coordinate Mn(2+). The interval 392–522 (QLQQLVVQSD…MQKNRELGGV (131 aa)) is regulatory domain.

This sequence belongs to the alpha-IPM synthase/homocitrate synthase family. LeuA type 1 subfamily. As to quaternary structure, homodimer. The cofactor is Mn(2+).

The protein localises to the cytoplasm. The catalysed reaction is 3-methyl-2-oxobutanoate + acetyl-CoA + H2O = (2S)-2-isopropylmalate + CoA + H(+). It participates in amino-acid biosynthesis; L-leucine biosynthesis; L-leucine from 3-methyl-2-oxobutanoate: step 1/4. Functionally, catalyzes the condensation of the acetyl group of acetyl-CoA with 3-methyl-2-oxobutanoate (2-ketoisovalerate) to form 3-carboxy-3-hydroxy-4-methylpentanoate (2-isopropylmalate). This is 2-isopropylmalate synthase from Shewanella baltica (strain OS155 / ATCC BAA-1091).